Consider the following 306-residue polypeptide: Ornithine carbamoyltransferase (306 aa).

Carbamoyl phosphate-binding positions include 51-54 (STRT), glutamine 78, arginine 102, and 129-132 (HPVQ). L-ornithine contacts are provided by residues asparagine 159, aspartate 223, and 227-228 (SM). Carbamoyl phosphate is bound by residues 263–264 (CL) and arginine 291.

Belongs to the aspartate/ornithine carbamoyltransferase superfamily. OTCase family.

It is found in the cytoplasm. It carries out the reaction carbamoyl phosphate + L-ornithine = L-citrulline + phosphate + H(+). Its pathway is amino-acid biosynthesis; L-arginine biosynthesis; L-arginine from L-ornithine and carbamoyl phosphate: step 1/3. Reversibly catalyzes the transfer of the carbamoyl group from carbamoyl phosphate (CP) to the N(epsilon) atom of ornithine (ORN) to produce L-citrulline. This is Ornithine carbamoyltransferase from Sulfurovum sp. (strain NBC37-1).